A 90-amino-acid polypeptide reads, in one-letter code: DNA-directed RNA polymerase subunit omega (90 aa).

Belongs to the RNA polymerase subunit omega family. In terms of assembly, the RNAP catalytic core consists of 2 alpha, 1 beta, 1 beta' and 1 omega subunit. When a sigma factor is associated with the core the holoenzyme is formed, which can initiate transcription.

It carries out the reaction RNA(n) + a ribonucleoside 5'-triphosphate = RNA(n+1) + diphosphate. Promotes RNA polymerase assembly. Latches the N- and C-terminal regions of the beta' subunit thereby facilitating its interaction with the beta and alpha subunits. The protein is DNA-directed RNA polymerase subunit omega of Histophilus somni (strain 129Pt) (Haemophilus somnus).